The following is a 238-amino-acid chain: Ribonuclease PH (238 aa).

Phosphate contacts are provided by residues R86 and 124-126; that span reads GTR.

This sequence belongs to the RNase PH family. Homohexameric ring arranged as a trimer of dimers.

It carries out the reaction tRNA(n+1) + phosphate = tRNA(n) + a ribonucleoside 5'-diphosphate. Phosphorolytic 3'-5' exoribonuclease that plays an important role in tRNA 3'-end maturation. Removes nucleotide residues following the 3'-CCA terminus of tRNAs; can also add nucleotides to the ends of RNA molecules by using nucleoside diphosphates as substrates, but this may not be physiologically important. Probably plays a role in initiation of 16S rRNA degradation (leading to ribosome degradation) during starvation. The polypeptide is Ribonuclease PH (Maricaulis maris (strain MCS10) (Caulobacter maris)).